The chain runs to 327 residues: MSKVVVCAMYKFVSLPDFERIQKPLLIVMEKSGIKGTLLLAKEGINGTVAGSQSAIDALLAWLATQPGLDNIVHKLSFDDDMPFYRTKVKLKKEIVTMGVEGIDPNEVVGTYVKPKDWNALISDPEVLLVDTRNDYEVKIGTFENALDPQTATFREFPEYVKQNLDPTKHKKVAMFCTGGIRCEKSTAYLKEQGFEDVYHLEGGILKYLEEVKQEESMWQGECFVFDNRVAVNHDLEKGQYDQCNACRMPITEAEKASSQFEQGVSCPHCIDKVTDKQRERFLERERQVQLSKQRGEAHIGSDVSAVIESRRAKKEQLKKSQNEKSV.

The Rhodanese domain maps to 123–217 (SDPEVLLVDT…YLEEVKQEES (95 aa)). Cys177 (cysteine persulfide intermediate) is an active-site residue.

It belongs to the TrhO family.

It catalyses the reaction uridine(34) in tRNA + AH2 + O2 = 5-hydroxyuridine(34) in tRNA + A + H2O. Its function is as follows. Catalyzes oxygen-dependent 5-hydroxyuridine (ho5U) modification at position 34 in tRNAs. This Shewanella piezotolerans (strain WP3 / JCM 13877) protein is tRNA uridine(34) hydroxylase.